The following is a 698-amino-acid chain: MOXD1 homolog 1 (698 aa).

The first 20 residues, 1–20 (MSVQDVLWIVLTVQLSFGLA), serve as a signal peptide directing secretion. 3 N-linked (GlcNAc...) asparagine glycosylation sites follow: Asn-36, Asn-140, and Asn-221. The DOMON domain occupies 54 to 174 (GLYWLKWWIN…DTFKVLWSIG (121 aa)). Residue Tyr-232 is part of the active site. 2 residues coordinate Cu cation: His-265 and His-266. A disulfide bond links Cys-272 and Cys-309. Residues His-347, His-425, and His-427 each coordinate Cu cation. Cystine bridges form between Cys-403–Cys-516 and Cys-479–Cys-501. The active site involves His-425. The N-linked (GlcNAc...) asparagine glycan is linked to Asn-465. Residue Met-500 participates in Cu cation binding. N-linked (GlcNAc...) asparagine glycans are attached at residues Asn-538 and Asn-561.

This sequence belongs to the copper type II ascorbate-dependent monooxygenase family. It depends on Cu(2+) as a cofactor.

Its subcellular location is the secreted. This is MOXD1 homolog 1 from Drosophila melanogaster (Fruit fly).